We begin with the raw amino-acid sequence, 421 residues long: Serine hydroxymethyltransferase (421 aa).

(6S)-5,6,7,8-tetrahydrofolate-binding positions include L121 and G125–L127. K230 is subject to N6-(pyridoxal phosphate)lysine.

This sequence belongs to the SHMT family. As to quaternary structure, homodimer. Pyridoxal 5'-phosphate is required as a cofactor.

Its subcellular location is the cytoplasm. The catalysed reaction is (6R)-5,10-methylene-5,6,7,8-tetrahydrofolate + glycine + H2O = (6S)-5,6,7,8-tetrahydrofolate + L-serine. It participates in one-carbon metabolism; tetrahydrofolate interconversion. Its pathway is amino-acid biosynthesis; glycine biosynthesis; glycine from L-serine: step 1/1. In terms of biological role, catalyzes the reversible interconversion of serine and glycine with tetrahydrofolate (THF) serving as the one-carbon carrier. This reaction serves as the major source of one-carbon groups required for the biosynthesis of purines, thymidylate, methionine, and other important biomolecules. Also exhibits THF-independent aldolase activity toward beta-hydroxyamino acids, producing glycine and aldehydes, via a retro-aldol mechanism. The chain is Serine hydroxymethyltransferase from Carboxydothermus hydrogenoformans (strain ATCC BAA-161 / DSM 6008 / Z-2901).